A 987-amino-acid polypeptide reads, in one-letter code: Sarcosine oxidase subunit alpha (987 aa).

Positions 198, 199, 206, 244, and 445 each coordinate NAD(+). T714 and E806 together coordinate (6R)-5,10-methylene-5,6,7,8-tetrahydrofolate.

Belongs to the GcvT family. Heterotetramer composed of subunits alpha (SoxA), beta (SoxB), gamma (SoxG) and delta (SoxD). It depends on NAD(+) as a cofactor.

It localises to the cytoplasm. The enzyme catalyses sarcosine + (6S)-5,6,7,8-tetrahydrofolate + O2 = (6R)-5,10-methylene-5,6,7,8-tetrahydrofolate + glycine + H2O2. It carries out the reaction sarcosine + O2 + H2O = formaldehyde + glycine + H2O2. Its function is as follows. In the presence of tetrahydrofolate, catalyzes the oxidative demethylation of sarcosine to yield glycine, 5,10-methylenetetrahydrofolate and hydrogen peroxide. In the absence of tetrahydrofolate, catalyzes the oxidative demethylation of sarcosine to yield glycine, formaldehyde and hydrogen peroxide. This Rhizobium meliloti (strain 1021) (Ensifer meliloti) protein is Sarcosine oxidase subunit alpha (soxA).